A 1353-amino-acid polypeptide reads, in one-letter code: Stress response protein NST1 (1353 aa).

The span at 1 to 12 (MSSKSQQPPTGL) shows a compositional bias: polar residues. 9 disordered regions span residues 1-66 (MSSK…FFNF), 216-422 (NANA…TQSS), 503-522 (NGLR…VEVD), 531-618 (DHRA…SFGS), 652-694 (RRSV…AEEG), 727-882 (LREL…AKET), 979-1119 (GLKS…DDAF), 1140-1276 (GSLI…GAGV), and 1308-1337 (GGTA…HQQQ). Residues 16–25 (AAKKRAKKAA) are compositionally biased toward basic residues. Positions 26–45 (KQSQNPQPQSAPQTSSQTPA) are enriched in low complexity. Residues 46 to 59 (SVPPLPPASVPDPL) are compositionally biased toward pro residues. Polar residues predominate over residues 218–229 (NARSFPSPQQTI). Over residues 242–254 (REEEYDDEEEIEE) the composition is skewed to acidic residues. Residues 268-277 (KKNKKKKKKG) are compositionally biased toward basic residues. Residues 287-300 (VEPPAPLPPLPPPS) are compositionally biased toward pro residues. Residues 317 to 330 (LPTHQPQPLSQQPP) are compositionally biased toward low complexity. Pro residues predominate over residues 331-349 (SLNPLPPPAPASAPTPTPP). Positions 368–388 (PARSARAAGKAPASAAPPHNA) are enriched in low complexity. Residues 531 to 541 (DHRAPELHDHD) are compositionally biased toward basic and acidic residues. Over residues 542–583 (PDDLDGEESEEYDDDDDYADDDELDDDDIGTDEADVGDEIDE) the composition is skewed to acidic residues. Basic and acidic residues predominate over residues 654–665 (SVREEQNLRDMQ). Residues 666–681 (EETDEEEEEEDDDESR) are compositionally biased toward acidic residues. Basic and acidic residues-rich tracts occupy residues 682–694 (DEPM…AEEG), 727–750 (LREL…EAQK), and 760–882 (QKAE…AKET). Residues 713–944 (AYRERVAKQR…AAQQAQRERA (232 aa)) adopt a coiled-coil conformation. A compositionally biased stretch (polar residues) spans 1009 to 1021 (TNATPGRSMQKTP). Positions 1154–1165 (PTPPAPIAPPNL) are enriched in pro residues. Composition is skewed to polar residues over residues 1174-1187 (SDGQ…LRST) and 1209-1220 (QPQQRRPTTSWD).

It belongs to the NST1 family.

Its subcellular location is the cytoplasm. In terms of biological role, may act as a negative regulator of salt tolerance. The chain is Stress response protein NST1 (NST1) from Cryptococcus neoformans var. neoformans serotype D (strain B-3501A) (Filobasidiella neoformans).